An 800-amino-acid polypeptide reads, in one-letter code: Heterogeneous nuclear ribonucleoprotein U (800 aa).

Ser-2 carries the N-acetylserine modification. A Phosphoserine modification is found at Ser-4. The SAP domain occupies 8 to 42 (VKKLKVSELKEELKKRRLSDKGLKADLMDRLQAAL). 2 positions are modified to N6-acetyllysine: Lys-17 and Lys-21. Residues 41–257 (ALDNEAGGRP…PQPPVEEEDE (217 aa)) are disordered. A Phosphoserine modification is found at Ser-58. Composition is skewed to low complexity over residues 71–80 (AGLEQEAAAG) and 103–113 (ENGAAGAADAG). Composition is skewed to acidic residues over residues 114 to 128 (AMEE…ENGD) and 134 to 147 (EGED…EGAG). Positions 153-173 (GEQQSQPPAAAAQQQPSQQRG) are enriched in low complexity. Lys-181 is modified (N6-acetyllysine). Ser-182 is modified (ADP-ribosylserine). Residues 194-205 (APPGARQGQQQA) are compositionally biased toward low complexity. The segment covering 209-242 (GKTEQKGGDKKRGVKRPREDHGRGYFEYIEENKY) has biased composition (basic and acidic residues). Arg-231 is subject to Citrulline. Lys-241 carries the post-translational modification N6-acetyllysine; alternate. Lys-241 participates in a covalent cross-link: Glycyl lysine isopeptide (Lys-Gly) (interchain with G-Cter in SUMO1); alternate. Lys-241 is covalently cross-linked (Glycyl lysine isopeptide (Lys-Gly) (interchain with G-Cter in SUMO2); alternate). A Phosphotyrosine modification is found at Tyr-242. Phosphoserine occurs at positions 243 and 247. In terms of domain architecture, B30.2/SPRY spans 244-440 (RAKSPQPPVE…VEFNFGQKEK (197 aa)). Thr-262 is subject to Phosphothreonine. Lys-328 carries the N6-acetyllysine modification. The tract at residues 464 to 648 (PKGPEEKKDC…QKLLEQYKEE (185 aa)) is ATPase domain. Lys-471 is covalently cross-linked (Glycyl lysine isopeptide (Lys-Gly) (interchain with G-Cter in SUMO2)). Position 480–487 (480–487 (GLPGAGKT)) interacts with ATP. Lys-492 and Lys-500 each carry N6-acetyllysine; alternate. Residues Lys-492 and Lys-500 each participate in a glycyl lysine isopeptide (Lys-Gly) (interchain with G-Cter in SUMO2); alternate cross-link. Position 508 is a phosphothreonine (Thr-508). A Glycyl lysine isopeptide (Lys-Gly) (interchain with G-Cter in SUMO2) cross-link involves residue Lys-512. An N6-acetyllysine modification is found at Lys-527. Lys-541 is subject to N6-acetyllysine; alternate. Lys-541 is covalently cross-linked (Glycyl lysine isopeptide (Lys-Gly) (interchain with G-Cter in SUMO2); alternate). Residue Lys-550 forms a Glycyl lysine isopeptide (Lys-Gly) (interchain with G-Cter in SUMO2) linkage. Thr-558 carries the post-translational modification Phosphothreonine. Glycyl lysine isopeptide (Lys-Gly) (interchain with G-Cter in SUMO2) cross-links involve residues Lys-585 and Lys-602. The tract at residues 587-602 (EDYKQRTQKKAEVEGK) is actin-binding. Lys-611 is subject to N6-acetyllysine; alternate. Lys-611 is covalently cross-linked (Glycyl lysine isopeptide (Lys-Gly) (interchain with G-Cter in SUMO2); alternate). A coiled-coil region spans residues 626 to 653 (DEITYVELQKEEAQKLLEQYKEESKKAL). Glycyl lysine isopeptide (Lys-Gly) (interchain with G-Cter in SUMO2) cross-links involve residues Lys-640 and Lys-646. Basic and acidic residues predominate over residues 647-659 (EESKKALPPEKKQ). A disordered region spans residues 647–729 (EESKKALPPE…GSGGIGYPYP (83 aa)). Arg-678 is subject to Omega-N-methylarginine. Residues 686-704 (GGFNMRGGNFRGGAPGNRG) show a composition bias toward gly residues. An RNA-binding RGG-box region spans residues 690–715 (MRGGNFRGGAPGNRGGYNRRGNMPQR). An asymmetric dimethylarginine mark is found at Arg-691, Arg-696, and Arg-703. Asymmetric dimethylarginine; alternate occurs at positions 709 and 715. Omega-N-methylarginine; alternate is present on residues Arg-709 and Arg-715. Residues 715-725 (RGGGGGSGGIG) show a composition bias toward gly residues. An asymmetric dimethylarginine mark is found at Arg-730 and Arg-737. The tract at residues 745 to 774 (NYNRGGMPNRGNYNQNFRGRGNNRGYKNQS) is disordered. Lys-789 is modified (N6-acetyllysine; alternate). Lys-789 is covalently cross-linked (Glycyl lysine isopeptide (Lys-Gly) (interchain with G-Cter in SUMO2); alternate).

In terms of assembly, oligomer (via ATPase domain and RNA-binding RGG-box region); oligomerization occurs upon ATP-binding in a chromatin-associated RNAs (caRNAs)- and transcription-dependent manner and is required for chromatin decompaction. ATP hydrolysis is required to cycle from an oligomeric to monomeric state to compact chromatin. Component of the coding region determinant (CRD)-mediated complex, composed of DHX9, HNRNPU, IGF2BP1, SYNCRIP and YBX1. Identified in the spliceosome C complex. Identified in a IGF2BP1-dependent mRNP granule complex containing untranslated mRNAs. Associates with heterogeneous nuclear ribonucleoprotein (hnRNP) particles. Associates (via middle region) with the C-terminal domain (CTD) RNA polymerase II (Pol II) holoenzyme; this association occurs in a RNA-independent manner. Associates (via middle region) with the core-TFIIH basal transcription factor complex; this association inhibits the CTD phosphorylation of RNA polymerase II holoenzyme by down-regulating TFIIH kinase activity. Associates with the telomerase holoenzyme complex. Associates with spindle microtubules (MTs) in a TPX2-dependent manner. Interacts (via C-terminus) with actin; this interaction is direct and mediates association with the phosphorylated CTD of RNA polymerase II and is disrupted in presence of the long non-coding H19 RNA. Interacts with AURKA. Interacts (via C-terminus) with CBX5; this interaction is, at least in part, RNA-dependent. Interacts with CR2. Interacts with CRY1. Interacts (via C-terminus) with EP300; this interaction enhances DNA-binding to nuclear scaffold/matrix attachment region (S/MAR) elements. Interacts with ERBB4. Interacts with GEMIN5. Interacts with IGF2BP1. Interacts with IGF2BP2 and IGF2BP3. Interacts with NCL; this interaction occurs during mitosis. Interacts (via C-terminus) with NR3C1 (via C-terminus). Interacts with PLK1; this interaction induces phosphorylation of HNRNPU at Ser-58 in mitosis. Interacts with POU3F4. Interacts with SMARCA4; this interaction occurs in embryonic stem cells and stimulates global Pol II-mediated transcription. Interacts (via C-terminus) with TOP2A; this interaction protects the topoisomerase TOP2A from degradation and positively regulates the relaxation of supercoiled DNA by TOP2A in a RNA-dependent manner. Interacts with TPX2; this interaction recruits HNRNPU to spindle microtubules (MTs). Interacts with UBQLN2. Interacts (via RNA-binding RGG-box region) with ZBTB7B; the interaction facilitates the recruitment of long non-coding RNA Blnc1 by ZBTB7B. Interacts with ERCC6. Cleaved at Asp-94 by CASP3 during T-cell apoptosis, resulting in a loss of DNA- and chromatin-binding activities. In terms of processing, extensively phosphorylated. Phosphorylated on Ser-58 by PLK1 and dephosphorylated by protein phosphatase 2A (PP2A) in mitosis. Post-translationally, arg-709 and Arg-715 are dimethylated, probably to asymmetric dimethylarginine. Citrullinated by PADI4.

The protein localises to the nucleus. Its subcellular location is the nucleus matrix. It is found in the chromosome. The protein resides in the nucleus speckle. It localises to the cytoplasm. The protein localises to the cytoskeleton. Its subcellular location is the microtubule organizing center. It is found in the centrosome. The protein resides in the centromere. It localises to the kinetochore. The protein localises to the spindle. Its subcellular location is the spindle pole. It is found in the midbody. The protein resides in the cell surface. It localises to the cytoplasmic granule. Functionally, DNA- and RNA-binding protein involved in several cellular processes such as nuclear chromatin organization, telomere-length regulation, transcription, mRNA alternative splicing and stability, Xist-mediated transcriptional silencing and mitotic cell progression. Plays a role in the regulation of interphase large-scale gene-rich chromatin organization through chromatin-associated RNAs (caRNAs) in a transcription-dependent manner, and thereby maintains genomic stability. Required for the localization of the long non-coding Xist RNA on the inactive chromosome X (Xi) and the subsequent initiation and maintenance of X-linked transcriptional gene silencing during X-inactivation. Plays a role as a RNA polymerase II (Pol II) holoenzyme transcription regulator. Promotes transcription initiation by direct association with the core-TFIIH basal transcription factor complex for the assembly of a functional pre-initiation complex with Pol II in a actin-dependent manner. Blocks Pol II transcription elongation activity by inhibiting the C-terminal domain (CTD) phosphorylation of Pol II and dissociates from Pol II pre-initiation complex prior to productive transcription elongation. Positively regulates CBX5-induced transcriptional gene silencing and retention of CBX5 in the nucleus. Negatively regulates glucocorticoid-mediated transcriptional activation. Key regulator of transcription initiation and elongation in embryonic stem cells upon leukemia inhibitory factor (LIF) signaling. Involved in the long non-coding RNA H19-mediated Pol II transcriptional repression. Participates in the circadian regulation of the core clock component BMAL1 transcription. Plays a role in the regulation of telomere length. Plays a role as a global pre-mRNA alternative splicing modulator by regulating U2 small nuclear ribonucleoprotein (snRNP) biogenesis. Plays a role in mRNA stability. Component of the CRD-mediated complex that promotes MYC mRNA stabilization. Enhances the expression of specific genes, such as tumor necrosis factor TNFA, by regulating mRNA stability, possibly through binding to the 3'-untranslated region (UTR). Plays a role in mitotic cell cycle regulation. Involved in the formation of stable mitotic spindle microtubules (MTs) attachment to kinetochore, spindle organization and chromosome congression. Phosphorylation at Ser-58 by PLK1 is required for chromosome alignement and segregation and progression through mitosis. Also contributes to the targeting of AURKA to mitotic spindle MTs. Binds to double- and single-stranded DNA and RNA, poly(A), poly(C) and poly(G) oligoribonucleotides. Binds to chromatin-associated RNAs (caRNAs). Associates with chromatin to scaffold/matrix attachment region (S/MAR) elements in a chromatin-associated RNAs (caRNAs)-dependent manner. Binds (via RNA-binding RGG-box region) to the long non-coding Xist RNA; this binding is direct and bridges the Xist RNA and the inactive chromosome X (Xi). Binds the long non-coding H19 RNA. Binds to SMN1/2 pre-mRNAs at G/U-rich regions. Binds to small nuclear RNAs (snRNAs). Binds to the 3'-UTR of TNFA mRNA. Also negatively regulates embryonic stem cell differentiation upon LIF signaling. Required for embryonic development. Binds to brown fat long non-coding RNA 1 (Blnc1); facilitates the recruitment of Blnc1 by ZBTB7B required to drive brown and beige fat development and thermogenesis. This is Heterogeneous nuclear ribonucleoprotein U from Mus musculus (Mouse).